The sequence spans 999 residues: Disks large-associated protein 1 (999 aa).

Disordered stretches follow at residues 155–213 (HSLE…GYWS), 395–418 (MAED…ARRA), and 918–989 (NWRP…DSIE). The segment covering 194–204 (RERCKSAEPKN) has biased composition (basic and acidic residues). Composition is skewed to basic and acidic residues over residues 923-932 (DPPERKERRL) and 947-965 (LARD…EARK). A compositionally biased stretch (polar residues) spans 976–985 (VRQNSATESA). A PDZ-binding motif is present at residues 997–999 (TRL).

The protein belongs to the SAPAP family.

It localises to the cell membrane. Its subcellular location is the postsynaptic density. The protein localises to the synapse. In terms of biological role, part of the postsynaptic scaffold in neuronal cells. This chain is Disks large-associated protein 1, found in Danio rerio (Zebrafish).